The following is a 347-amino-acid chain: NADH-ubiquinone oxidoreductase chain 2 (347 aa).

9 consecutive transmembrane segments (helical) span residues 3 to 23 (PPILIIIMFTVISGTIMVLMS), 25 to 45 (HWLMIWIGFEMNMLAIIPILM), 67 to 87 (SMLLMLGIIMNLLLTGQWAVL), 150 to 170 (NPHLLMTMALMSVLVGGWGGL), 178 to 198 (ILAYSSIAHMGWMIAVMTYSP), 201 to 221 (MLLNLSIYITMTLGTFMLFMF), 237 to 257 (LPLITSLILIIMLSLGGLPPL), 274 to 294 (NMIITTMLMTITALLNLYFYM), and 323 to 343 (MTMLPPLIVISTMLLPLTPMM).

The protein belongs to the complex I subunit 2 family. As to quaternary structure, core subunit of respiratory chain NADH dehydrogenase (Complex I) which is composed of 45 different subunits. Interacts with TMEM242.

It is found in the mitochondrion inner membrane. It catalyses the reaction a ubiquinone + NADH + 5 H(+)(in) = a ubiquinol + NAD(+) + 4 H(+)(out). Core subunit of the mitochondrial membrane respiratory chain NADH dehydrogenase (Complex I) which catalyzes electron transfer from NADH through the respiratory chain, using ubiquinone as an electron acceptor. Essential for the catalytic activity and assembly of complex I. The protein is NADH-ubiquinone oxidoreductase chain 2 of Mustela kathiah (Yellow-bellied weasel).